Consider the following 235-residue polypeptide: MSDLVFYDVASTGANGFDPDAGYMDFCVKNAELLNLAAVRIFFLNAAKAKAALSRKPERKANPKFGEWQVEVINNHFPGNRNNPIGNNDLTIHRLSGYLARWVLDQYNENDDESQHELIRTTIINPIAESNGVGWDSGPEIYLSFFPGTEMFLETFKFYPLTIGIHRVKQGMMDPQYLKKALRQRYGTLTADKWMSQKVAAIAKSLKDVEQLKWGKGGLSDTAKTFLQKFGIRLP.

15 residues coordinate RNA: D18, A47, K50, N75, H76, R81, R94, I124, P126, E129, R167, Y177, R183, Q184, and R185.

This sequence belongs to the orthobunyavirus nucleocapsid protein family. In terms of assembly, homotetramer. Binds the viral genomic RNA. Interacts with host PABP1.

The protein resides in the virion. Its function is as follows. Encapsidates the genome protecting it from nucleases. The encapsidated genomic RNA is termed the nucleocapsid (NC) and serves as template for transcription and replication. The NC have a helical organization. Seems to participate in the nuclear relocalization of host PABP1, thereby inhibiting host cellular translation. This chain is Nucleoprotein (N), found in Cervidae (Deer).